The chain runs to 119 residues: MNAPPDFRRAASHALWLALALTFACPLPGLADEHPDARRQAQLRHLLLQDCGSCHGLRLTGGLGPALTPEALRGKPRESLVATVLMGRPQTPMPPWAGLLSEDDAGWLVDRLIEGEIAP.

An N-terminal signal peptide occupies residues 1-20 (MNAPPDFRRAASHALWLALA). Cys-51, Cys-54, and His-55 together coordinate heme c.

In terms of processing, binds 1 heme c group covalently per subunit.

The protein resides in the periplasm. Functionally, monoheme c-type cytochrome. This Pseudomonas aeruginosa (strain ATCC 15692 / DSM 22644 / CIP 104116 / JCM 14847 / LMG 12228 / 1C / PRS 101 / PAO1) protein is Cytochrome c55X (nirC).